Reading from the N-terminus, the 383-residue chain is S-adenosylmethionine synthase (383 aa).

His-15 serves as a coordination point for ATP. Asp-17 serves as a coordination point for Mg(2+). Glu-43 serves as a coordination point for K(+). L-methionine-binding residues include Glu-56 and Gln-99. Residues 99-109 (QSPDINQGVDR) are flexible loop. ATP is bound by residues 164–166 (DAK), 230–231 (RF), Asp-239, 245–246 (RK), Ala-262, and Lys-266. Asp-239 contacts L-methionine. Lys-270 provides a ligand contact to L-methionine.

It belongs to the AdoMet synthase family. Homotetramer; dimer of dimers. Mg(2+) serves as cofactor. K(+) is required as a cofactor.

The protein resides in the cytoplasm. The catalysed reaction is L-methionine + ATP + H2O = S-adenosyl-L-methionine + phosphate + diphosphate. It participates in amino-acid biosynthesis; S-adenosyl-L-methionine biosynthesis; S-adenosyl-L-methionine from L-methionine: step 1/1. Its function is as follows. Catalyzes the formation of S-adenosylmethionine (AdoMet) from methionine and ATP. The overall synthetic reaction is composed of two sequential steps, AdoMet formation and the subsequent tripolyphosphate hydrolysis which occurs prior to release of AdoMet from the enzyme. This Pectobacterium carotovorum subsp. carotovorum (strain PC1) protein is S-adenosylmethionine synthase.